The chain runs to 164 residues: Pyruvoyl-dependent arginine decarboxylase (164 aa).

Position 52 is a pyruvic acid (Ser) (Ser52).

Belongs to the PdaD family. The cofactor is pyruvate.

It catalyses the reaction L-arginine + H(+) = agmatine + CO2. This Methanococcus maripaludis (strain C6 / ATCC BAA-1332) protein is Pyruvoyl-dependent arginine decarboxylase.